Reading from the N-terminus, the 533-residue chain is Beta-glucosidase 10 (533 aa).

A signal peptide spans 1 to 23 (MAVAGAMVMSGGVLLLLLAFTCA). A beta-D-glucoside is bound at residue glutamine 53. N-linked (GlcNAc...) asparagine glycosylation occurs at asparagine 122. A beta-D-glucoside-binding positions include histidine 157 and 202–203 (NE). The Proton donor role is filled by glutamate 203. Cysteine 222 and cysteine 230 are oxidised to a cystine. Tyrosine 369 serves as a coordination point for a beta-D-glucoside. N-linked (GlcNAc...) asparagine glycosylation occurs at asparagine 384. Residue glutamate 440 participates in a beta-D-glucoside binding. Glutamate 440 serves as the catalytic Nucleophile. Asparagine 448 carries N-linked (GlcNAc...) asparagine glycosylation. A beta-D-glucoside-binding positions include tryptophan 489, 496 to 497 (EW), and phenylalanine 505.

It belongs to the glycosyl hydrolase 1 family.

It catalyses the reaction Hydrolysis of terminal, non-reducing beta-D-glucosyl residues with release of beta-D-glucose.. The polypeptide is Beta-glucosidase 10 (BGLU10) (Oryza sativa subsp. japonica (Rice)).